A 252-amino-acid polypeptide reads, in one-letter code: Pyrroloquinoline-quinone synthase (252 aa).

It belongs to the PqqC family.

It catalyses the reaction 6-(2-amino-2-carboxyethyl)-7,8-dioxo-1,2,3,4,7,8-hexahydroquinoline-2,4-dicarboxylate + 3 O2 = pyrroloquinoline quinone + 2 H2O2 + 2 H2O + H(+). Its pathway is cofactor biosynthesis; pyrroloquinoline quinone biosynthesis. In terms of biological role, ring cyclization and eight-electron oxidation of 3a-(2-amino-2-carboxyethyl)-4,5-dioxo-4,5,6,7,8,9-hexahydroquinoline-7,9-dicarboxylic-acid to PQQ. This Acinetobacter baumannii (strain AB307-0294) protein is Pyrroloquinoline-quinone synthase.